The chain runs to 303 residues: N-acetyl-D-glucosamine kinase (303 aa).

Residues 4–11 (GFDIGGTK) and 133–140 (GVGGGLVF) each bind ATP. Residues His-157, Cys-177, Cys-179, and Cys-184 each coordinate Zn(2+).

The protein belongs to the ROK (NagC/XylR) family. NagK subfamily.

The enzyme catalyses N-acetyl-D-glucosamine + ATP = N-acetyl-D-glucosamine 6-phosphate + ADP + H(+). It functions in the pathway cell wall biogenesis; peptidoglycan recycling. In terms of biological role, catalyzes the phosphorylation of N-acetyl-D-glucosamine (GlcNAc) derived from cell-wall degradation, yielding GlcNAc-6-P. The chain is N-acetyl-D-glucosamine kinase from Shigella flexneri serotype 5b (strain 8401).